The following is a 704-amino-acid chain: Myb-related protein B (704 aa).

3 consecutive HTH myb-type domains span residues 26–77 (RDNR…LRVL), 78–133 (NPDL…NPEV), and 134–184 (KKSC…KRKV). A DNA-binding region (H-T-H motif) is located at residues 54–77 (WKFLASHFPNRTDQQCQYRWLRVL). Lys104 participates in a covalent cross-link: Glycyl lysine isopeptide (Lys-Gly) (interchain with G-Cter in SUMO2). 2 DNA-binding regions (H-T-H motif) span residues 106–129 (WTLIAKHLKGRLGKQCRERWHNHL) and 157–180 (WAEIAKMLPGRTDNAVKNHWNSTI). A Glycyl lysine isopeptide (Lys-Gly) (interchain with G-Cter in SUMO2) cross-link involves residue Lys197. Position 267 is a phosphothreonine (Thr267). Residue Lys275 forms a Glycyl lysine isopeptide (Lys-Gly) (interchain with G-Cter in SUMO2) linkage. At Ser282 the chain carries Phosphoserine. The interval 325–412 (LSKFDLPEEP…GSGIGTPPSV (88 aa)) is disordered. The span at 339–366 (SVVSSPVQPQTSQQQQEEALQSSQQAAT) shows a compositional bias: low complexity. Ser396 carries the post-translational modification Phosphoserine. Lys414 participates in a covalent cross-link: Glycyl lysine isopeptide (Lys-Gly) (interchain with G-Cter in SUMO2). Thr443 and Thr447 each carry phosphothreonine; by CDK2. Glycyl lysine isopeptide (Lys-Gly) (interchain with G-Cter in SUMO2) cross-links involve residues Lys450 and Lys485. A phosphothreonine; by CDK2 mark is found at Thr490 and Thr497. Residues Lys502 and Lys513 each participate in a glycyl lysine isopeptide (Lys-Gly) (interchain with G-Cter in SUMO2) cross-link. Phosphothreonine; by CDK2 is present on Thr524. Glycyl lysine isopeptide (Lys-Gly) (interchain with G-Cter in SUMO2) cross-links involve residues Lys527, Lys537, and Lys550. The residue at position 581 (Ser581) is a Phosphoserine; by CDK2. Residues Lys588 and Lys600 each participate in a glycyl lysine isopeptide (Lys-Gly) (interchain with G-Cter in SUMO2) cross-link. The segment at 603-626 (SSTMPKPLSLPTSVTPSSCGFTSP) is disordered. A compositionally biased stretch (low complexity) spans 607 to 620 (PKPLSLPTSVTPSS). Residues Lys629, Lys643, and Lys652 each participate in a glycyl lysine isopeptide (Lys-Gly) (interchain with G-Cter in SUMO2) cross-link.

Component of the DREAM complex (also named LINC complex) at least composed of E2F4, E2F5, LIN9, LIN37, LIN52, LIN54, MYBL1, MYBL2, RBL1, RBL2, RBBP4, TFDP1 and TFDP2. The complex exists in quiescent cells where it represses cell cycle-dependent genes. It dissociates in S phase when LIN9, LIN37, LIN52 and LIN54 form a subcomplex that binds to MYBL2. Interacts with CCNF (via the Cyclin N-terminal domain). Post-translationally, phosphorylated by cyclin A/CDK2 during S-phase. Phosphorylation at Thr-524 is probably involved in transcriptional activity.

The protein resides in the nucleus. Functionally, transcription factor involved in the regulation of cell survival, proliferation, and differentiation. Transactivates the expression of the CLU gene. This chain is Myb-related protein B (Mybl2), found in Mus musculus (Mouse).